The primary structure comprises 265 residues: Selenoprotein Pb (265 aa).

The first 18 residues, 1-18 (MQALWPLLLSALPALLGA), serve as a signal peptide directing secretion. The N-linked (GlcNAc...) asparagine glycan is linked to Asn-28. Sec-64 is a non-standard amino acid (selenocysteine). Residues Asn-88, Asn-178, Asn-184, and Asn-207 are each glycosylated (N-linked (GlcNAc...) asparagine). The segment at 188 to 265 (SESSDSTKND…SHQEHVHNHR (78 aa)) is disordered. The segment covering 201–211 (ENNQRPNSTEP) has biased composition (polar residues). The segment covering 215-231 (AHHHHHQQHEPHHHHHN) has biased composition (basic residues). A compositionally biased stretch (basic and acidic residues) spans 239-265 (KSGDSDVTGKPKEPPHHSHQEHVHNHR).

The protein resides in the secreted. Its function is as follows. Might be responsible for some of the extracellular antioxidant defense properties of selenium. The polypeptide is Selenoprotein Pb (sepp1b) (Danio rerio (Zebrafish)).